Reading from the N-terminus, the 194-residue chain is uncharacterized protein (194 aa).

Positions 45 to 138 are disordered; sequence QLLGVPEQHR…AGPPRGDWGV (94 aa). Phosphoserine occurs at positions 69 and 76. Over residues 97-106 the composition is skewed to pro residues; sequence PPLPPPPVLP. Low complexity predominate over residues 107 to 116; sequence GPGEELPGAR. Over residues 117–128 the composition is skewed to gly residues; sequence LPGGGGDDGAGR.

This is an uncharacterized protein from Homo sapiens (Human).